Consider the following 955-residue polypeptide: Centrosomal protein of 112 kDa (955 aa).

Residues 277 to 954 (QKHDADVQKI…QEELTTYQGR (678 aa)) are a coiled coil.

The protein resides in the cytoplasm. The protein localises to the cytoskeleton. Its subcellular location is the microtubule organizing center. It localises to the centrosome. In Homo sapiens (Human), this protein is Centrosomal protein of 112 kDa (CEP112).